Consider the following 329-residue polypeptide: Cytosolic sulfotransferase 6 (329 aa).

Position 74 to 79 (74 to 79 (KCGTTW)) interacts with 3'-phosphoadenylyl sulfate. Residue H140 is the Proton acceptor of the active site. Residues R162, S170, and 295–297 (RKG) each bind 3'-phosphoadenylyl sulfate.

It belongs to the sulfotransferase 1 family.

It is found in the cytoplasm. Sulfotransferase that utilizes 3'-phospho-5'-adenylyl sulfate (PAPS) as sulfonate donor. The sequence is that of Cytosolic sulfotransferase 6 (SOT6) from Arabidopsis thaliana (Mouse-ear cress).